A 203-amino-acid polypeptide reads, in one-letter code: Thymidylate kinase (203 aa).

Residue 9–16 participates in ATP binding; it reads GPEGAGKT.

This sequence belongs to the thymidylate kinase family.

The enzyme catalyses dTMP + ATP = dTDP + ADP. In terms of biological role, phosphorylation of dTMP to form dTDP in both de novo and salvage pathways of dTTP synthesis. This is Thymidylate kinase from Staphylococcus epidermidis (strain ATCC 35984 / DSM 28319 / BCRC 17069 / CCUG 31568 / BM 3577 / RP62A).